The sequence spans 454 residues: Carbon catabolite repressor protein 4 homolog 5 (454 aa).

Residues 1–76 are disordered; it reads MSGYERKNTT…SLRRRRRTKE (76 aa). The segment covering 31-41 has biased composition (basic and acidic residues); sequence VYEKSNRKESI. A compositionally biased stretch (basic residues) spans 61–75; that stretch reads VRHSKSSLRRRRRTK. E153 serves as a coordination point for Mg(2+).

The protein belongs to the CCR4/nocturin family. Component of the CCR4-NOT complex, at least composed of CRR4 and CAF1 proteins. Requires Mg(2+) as cofactor.

The protein resides in the nucleus. The protein localises to the cytoplasm. It catalyses the reaction Exonucleolytic cleavage of poly(A) to 5'-AMP.. Functionally, acts as a catalytic component of the CCR4-NOT core complex, which in the nucleus seems to be a general transcription factor, and in the cytoplasm the major mRNA deadenylase involved in mRNA turnover. The protein is Carbon catabolite repressor protein 4 homolog 5 (CCR4-5) of Arabidopsis thaliana (Mouse-ear cress).